A 272-amino-acid chain; its full sequence is Insulin-like growth factor-binding protein 5 (272 aa).

The first 20 residues, 1–20 (MVLLTAVLLLLAAYAGPAQS), serve as a signal peptide directing secretion. One can recognise an IGFBP N-terminal domain in the interval 23–103 (SFVHCEPCDE…LHGRGVCLNE (81 aa)). 6 cysteine pairs are disulfide-bonded: Cys-27/Cys-53, Cys-30/Cys-55, Cys-38/Cys-56, Cys-45/Cys-59, Cys-67/Cys-80, and Cys-74/Cys-100. Residues 111–122 (KIERDSREHEEP) show a composition bias toward basic and acidic residues. The interval 111–130 (KIERDSREHEEPTTSEMAEE) is disordered. Residue Ser-116 is modified to Phosphoserine; by FAM20C. An O-linked (HexNAc...) threonine glycan is attached at Thr-172. The Thyroglobulin type-1 domain maps to 189–263 (QGPCRRHMEA…MEYVDGDFQC (75 aa)). Cystine bridges form between Cys-192-Cys-219, Cys-230-Cys-241, and Cys-243-Cys-263.

As to quaternary structure, interacts with IGF1; this interaction enhances the growth stimulatory effects of IGF1 on fibroblasts. Interacts with CAV1; this interaction allows trafficking of IGFBP5 from the plasma membrane to the nucleus. Interacts with NCL; this interaction is necessary for IGFBP5 localization to the nucleus. Post-translationally, cleaved by C1S in extracellular space. Osteosarcoma, and at lower levels in liver, kidney and brain.

The protein localises to the secreted. Its subcellular location is the cytoplasm. It is found in the nucleus. Functionally, multifunctional protein that plays a critical role in regulating the availability of IGFs to their receptors and thereby regulates IGF-mediated cellular processes including proliferation, differentiation, and apoptosis in a cell-type specific manner. Increases the cell proliferation of osteoblasts, intestinal smooth muscle cells and neuroblastoma cells. Enhances adhesion and survival of epithelial cells but decreases adhesion of mesenchymal cells. Once secreted, acts as a major mediator of mTORC1-dependent feedback inhibition of IGF1 signaling. Also plays a role in the induction of extracellular matrix (ECM) production and deposition independently of its nuclear translocation and binding to IGFs. Acts itself as a growth factor that can act independently of IGFs to regulate bone formation. Acts as a ligand for the ROR1 receptor which triggers formation of ROR1/HER2 heterodimer to enhance CREB oncogenic signaling. In Homo sapiens (Human), this protein is Insulin-like growth factor-binding protein 5 (IGFBP5).